A 637-amino-acid chain; its full sequence is Chaperone protein HtpG (637 aa).

The segment at 1 to 345 (MSQQETHGFQ…SNDLPLNVSR (345 aa)) is a; substrate-binding. A b region spans residues 346–562 (EILQDNHITK…EGEMSTQMIK (217 aa)). The interval 563 to 637 (LMQAAGQPVP…MNQMLLANMK (75 aa)) is c.

It belongs to the heat shock protein 90 family. Homodimer.

The protein resides in the cytoplasm. Molecular chaperone. Has ATPase activity. The protein is Chaperone protein HtpG of Shewanella sp. (strain W3-18-1).